The chain runs to 52 residues: Large ribosomal subunit protein bL32c (52 aa).

The protein belongs to the bacterial ribosomal protein bL32 family.

It is found in the plastid. Its subcellular location is the chloroplast. The protein is Large ribosomal subunit protein bL32c of Olimarabidopsis pumila (Dwarf rocket).